Reading from the N-terminus, the 352-residue chain is Tubby-like F-box protein 10 (352 aa).

The segment covering 1 to 11 (MAAVREPREEA) has biased composition (basic and acidic residues). Residues 1-23 (MAAVREPREEAAVGEGEGEEEGR) form a disordered region. An F-box domain is found at 22–78 (GRWGGLLPELVEEVVRRVEASGGERWPARKDLVSCACVCRRWREAAAAVVRPLPESG).

The protein belongs to the TUB family. Ubiquitous.

This chain is Tubby-like F-box protein 10 (TULP10), found in Oryza sativa subsp. japonica (Rice).